Reading from the N-terminus, the 292-residue chain is MAQHDQLHRYLFEQFAVRGELVTVSETWKQILENHNYPQPVKRVLGELLVATSLLTATLKFAGDITVQLQGDGPMNMAVINGNNQQQMRGVARVQGEVPEGADLKTLVGNGFLVITITPDEGERYQGVVGLEGDTLAECLEDYFLRSEQLPTRLFIRTGEVEGQLAAGGMLLQVLPAQNAQGNDFEHLATLTETIKTEELFTLPANEVLWRLYHEEEVTLYDPQDVEFKCTCSRERCAGALRTLPDEEIDSIMAEDGEIDMNCDYCGSHYVFNAMDIAEIRNNASPADPQVH.

2 disulfide bridges follow: C230–C232 and C263–C266.

The protein belongs to the HSP33 family. Post-translationally, under oxidizing conditions two disulfide bonds are formed involving the reactive cysteines. Under reducing conditions zinc is bound to the reactive cysteines and the protein is inactive.

It localises to the cytoplasm. Its function is as follows. Redox regulated molecular chaperone. Protects both thermally unfolding and oxidatively damaged proteins from irreversible aggregation. Plays an important role in the bacterial defense system toward oxidative stress. The protein is 33 kDa chaperonin of Enterobacter sp. (strain 638).